The following is a 619-amino-acid chain: Chaperone protein HscA homolog (619 aa).

Belongs to the heat shock protein 70 family.

Its function is as follows. Chaperone involved in the maturation of iron-sulfur cluster-containing proteins. Has a low intrinsic ATPase activity which is markedly stimulated by HscB. This is Chaperone protein HscA homolog from Haemophilus influenzae (strain PittEE).